The following is a 264-amino-acid chain: Astacin-like metalloprotease toxin 1 (264 aa).

Positions 1-16 are cleaved as a signal peptide; the sequence is MIKYIGVFAFLVGGFC. Residues 17 to 51 constitute a propeptide that is removed on maturation; sequence HDFETVISNQDPIVDGMRLVEGDMLFDDGPLFTER. One can recognise a Peptidase M12A domain in the interval 52-249; the sequence is NAVKYDQQLW…VKVNKLYKCP (198 aa). Disulfide bonds link cysteine 93–cysteine 248 and cysteine 114–cysteine 135. Residue histidine 143 coordinates Zn(2+). Glutamate 144 is a catalytic residue. Histidine 147 and histidine 153 together coordinate Zn(2+). N-linked (GlcNAc...) asparagine glycosylation is found at asparagine 173 and asparagine 185.

In terms of assembly, monomer. Zn(2+) serves as cofactor. Expressed by the venom gland.

The protein localises to the secreted. With respect to regulation, inhibited by 1,10-phenanthroline. In terms of biological role, zinc metalloprotease. Provoques deadhesion of endothelial cells from cell cultures, and also degradation of fibronectin, fibrinogen and gelatin in vitro. Its role in the venom is not fully understood but it might act as a spreading factor that facilitates diffusion of other venom toxins. Alternatively, it might be involved in the proteolytic processing of other venom toxins or it might play a role in extra-oral digestion of prey. This chain is Astacin-like metalloprotease toxin 1, found in Loxosceles intermedia (Brown spider).